The following is a 247-amino-acid chain: MSGHSKWATIRRKKGAIDAKRGAIFTRIAKEISVAAKEGGGDQEGNPRLRLAVTKAKAANMPKDNIERAIKKGTGGLEGMVYEECLYECYAPGGVAIMVDVLTDKKSRTTPEIKSILTKLGGSLANAGAVSRLFERKGQLTLKADQISEEALFDLALGAGAEDIQVNDGMYVVLTSPSEYEAVQSALSSKGLNMEESEIKYIPMTTVEVNEKETAEKVMKLIENLEANDDVQGVSSNFELGEGVELD.

The protein belongs to the TACO1 family.

It localises to the cytoplasm. In Leptospira biflexa serovar Patoc (strain Patoc 1 / Ames), this protein is Probable transcriptional regulatory protein LBF_0056.